The chain runs to 458 residues: Bifunctional protein GlmU (458 aa).

The pyrophosphorylase stretch occupies residues 1 to 230 (MENRYAIILA…FDEAMGVNDR (230 aa)). Residues 9–12 (LAAG), lysine 23, glutamine 73, and 78–79 (GT) each bind UDP-N-acetyl-alpha-D-glucosamine. Aspartate 103 contacts Mg(2+). UDP-N-acetyl-alpha-D-glucosamine contacts are provided by glycine 140, glutamate 155, asparagine 170, and asparagine 228. Mg(2+) is bound at residue asparagine 228. The linker stretch occupies residues 231–251 (VALSTANKIMHRRLNEMHMRN). The tract at residues 252–458 (GVTFIDPDTT…YAKKLPYMKD (207 aa)) is N-acetyltransferase. Residues arginine 333 and lysine 351 each contribute to the UDP-N-acetyl-alpha-D-glucosamine site. The Proton acceptor role is filled by histidine 363. 2 residues coordinate UDP-N-acetyl-alpha-D-glucosamine: tyrosine 366 and asparagine 377. Residues 386–387 (NY), serine 405, alanine 423, and arginine 440 each bind acetyl-CoA.

The protein in the N-terminal section; belongs to the N-acetylglucosamine-1-phosphate uridyltransferase family. In the C-terminal section; belongs to the transferase hexapeptide repeat family. In terms of assembly, homotrimer. It depends on Mg(2+) as a cofactor.

Its subcellular location is the cytoplasm. It catalyses the reaction alpha-D-glucosamine 1-phosphate + acetyl-CoA = N-acetyl-alpha-D-glucosamine 1-phosphate + CoA + H(+). The enzyme catalyses N-acetyl-alpha-D-glucosamine 1-phosphate + UTP + H(+) = UDP-N-acetyl-alpha-D-glucosamine + diphosphate. Its pathway is nucleotide-sugar biosynthesis; UDP-N-acetyl-alpha-D-glucosamine biosynthesis; N-acetyl-alpha-D-glucosamine 1-phosphate from alpha-D-glucosamine 6-phosphate (route II): step 2/2. It participates in nucleotide-sugar biosynthesis; UDP-N-acetyl-alpha-D-glucosamine biosynthesis; UDP-N-acetyl-alpha-D-glucosamine from N-acetyl-alpha-D-glucosamine 1-phosphate: step 1/1. The protein operates within bacterial outer membrane biogenesis; LPS lipid A biosynthesis. Its function is as follows. Catalyzes the last two sequential reactions in the de novo biosynthetic pathway for UDP-N-acetylglucosamine (UDP-GlcNAc). The C-terminal domain catalyzes the transfer of acetyl group from acetyl coenzyme A to glucosamine-1-phosphate (GlcN-1-P) to produce N-acetylglucosamine-1-phosphate (GlcNAc-1-P), which is converted into UDP-GlcNAc by the transfer of uridine 5-monophosphate (from uridine 5-triphosphate), a reaction catalyzed by the N-terminal domain. This Enterococcus faecalis (strain ATCC 700802 / V583) protein is Bifunctional protein GlmU.